The following is a 340-amino-acid chain: uncharacterized protein (340 aa).

2 helical membrane passes run 162–182 and 239–259; these read PLVP…VLAG and FWIA…IVVP.

The protein resides in the cell membrane. This is an uncharacterized protein from Mycobacterium tuberculosis (strain CDC 1551 / Oshkosh).